A 327-amino-acid chain; its full sequence is Surface protein P12p (327 aa).

6-Cys domains lie at 21 to 168 (NIEI…LKKN) and 169 to 304 (IIFG…FSNY). 6 disulfides stabilise this stretch: cysteine 25–cysteine 60, cysteine 74–cysteine 144, cysteine 93–cysteine 142, cysteine 173–cysteine 208, cysteine 223–cysteine 285, and cysteine 234–cysteine 283. N-linked (GlcNAc...) asparagine glycans are attached at residues asparagine 246, asparagine 264, and asparagine 298.

It is found in the cell surface. The protein localises to the cell membrane. In Plasmodium berghei (strain Anka), this protein is Surface protein P12p (P12p).